The sequence spans 242 residues: uncharacterized protein (242 aa).

A signal peptide spans 1–17 (MKFSPAYLLAFAPIVAA). N-linked (GlcNAc...) asparagine glycans are attached at residues Asn47, Asn86, Asn122, Asn159, and Asn178. The segment at 176-214 (NANESTADGQAQSGSSGSSSDSGSHSGHSSATQTSSTTA) is disordered. Over residues 180–214 (STADGQAQSGSSGSSSDSGSHSGHSSATQTSSTTA) the composition is skewed to low complexity. Ala218 is lipidated: GPI-like-anchor amidated alanine. A propeptide spans 219-242 (GAVALETAAWGILGAAVVGGLAVL) (removed in mature form).

The GPI-like anchor contains a phosphoceramide lipid group. The anchor position has not been determined.

Its subcellular location is the cell membrane. This is an uncharacterized protein from Aspergillus fumigatus (strain ATCC MYA-4609 / CBS 101355 / FGSC A1100 / Af293) (Neosartorya fumigata).